The chain runs to 156 residues: Small ribosomal subunit protein uS7 (156 aa).

The protein belongs to the universal ribosomal protein uS7 family. In terms of assembly, part of the 30S ribosomal subunit. Contacts proteins S9 and S11.

In terms of biological role, one of the primary rRNA binding proteins, it binds directly to 16S rRNA where it nucleates assembly of the head domain of the 30S subunit. Is located at the subunit interface close to the decoding center, probably blocks exit of the E-site tRNA. This chain is Small ribosomal subunit protein uS7, found in Rippkaea orientalis (strain PCC 8801 / RF-1) (Cyanothece sp. (strain PCC 8801)).